The sequence spans 1193 residues: Chloride channel protein 2 (1193 aa).

At 1 to 168 (MVYFGDRQRD…WIWRHTVARL (168 aa)) the chain is on the cytoplasmic side. Residues 76 to 97 (SHAFYPCPPPAENARDSDSSDD) are disordered. A run of 2 helical transmembrane segments spans residues 169–204 (GEDW…IWLY) and 213–236 (VQYI…VHLI). A Selectivity filter part_1 motif is present at residues 242-246 (GSGIP). S243 is a binding site for chloride. Positions 245-252 (IPEMKTIL) form an intramembrane region, helical. 2 consecutive transmembrane segments (helical) span residues 261 to 279 (LTFK…TLGS) and 286 to 304 (EGPF…SKLV). The short motif at 284-288 (GKEGP) is the Selectivity filter part_2 element. 2 consecutive intramembrane regions (helical) follow at residues 320–332 (MLAA…VGAC) and 336–344 (PVGGVLFSI). 5 consecutive transmembrane segments (helical) span residues 356-373 (YWRG…FRLL), 402-430 (LFVF…VLFM), 439-458 (FLQK…VSSI), 511-530 (FGNL…IAST), and 536-555 (GMFI…VGEF). The Selectivity filter part_3 motif lies at 536 to 540 (GMFIP). Position 538 (F538) interacts with chloride. The helical intramembrane region spans 576-590 (GGYAVVGAAAFSGSV). An intramembrane region (note=Loop between two helices) is located at residues 591 to 592 (TH). The segment at residues 593–604 (TVSVAVIIFEMT) is an intramembrane region (helical). Positions 605-609 (GQITH) form an intramembrane region, note=Loop between two helices. Residues 610 to 626 (VVPVMIAVLVANAVAAL) traverse the membrane as a helical segment. Residues 627–1193 (LQPSIYDSII…KSNTENGNHA (567 aa)) are Cytoplasmic-facing. Residue Y632 participates in chloride binding. Residues 663–723 (MVRDVKYIWH…KMIEKHIGRE (61 aa)) enclose the CBS 1 domain. Disordered stretches follow at residues 848 to 884 (TLQD…VSKK), 1103 to 1122 (NSFV…AVEK), and 1159 to 1193 (IKHT…GNHA). Positions 1048 to 1105 (IDPSPFQLVERTSILKVHSLFSMVGINHAYVTKIGRLVGVVGLKELRKAIEDINSNSF) constitute a CBS 2 domain. The segment covering 1165–1193 (GTVSLTMPPQESKQSPSADKSNTENGNHA) has biased composition (polar residues).

This sequence belongs to the chloride channel (TC 2.A.49) family. As to expression, at embryonic stages 13-16, expressed in a subset of the midline cells of the midline primordium and in all of the midline glia. Expressed along the Z-line of the sarcomere in larval longitudinal muscles.

The protein resides in the membrane. Voltage-gated chloride channel. Chloride channels have several functions including the regulation of cell volume; membrane potential stabilization, signal transduction and transepithelial transport. This Drosophila melanogaster (Fruit fly) protein is Chloride channel protein 2 (ClC-a).